A 159-amino-acid polypeptide reads, in one-letter code: MPELKIKTEKVEKQLTKEPLVLKTPKEQIDNLGKFYATGKRKNAIARVWLKVGKGKIVVNNKTIAQYFPSETYVKTILQPFVLTKTIDQYDIICTVRGGGISGQKGAILHGISKALDKSAPDFHAILRKGGLLTRDSRVVERKKYGQRKARKKTQFSKR.

This sequence belongs to the universal ribosomal protein uS9 family.

The protein is Small ribosomal subunit protein uS9 of Rickettsia conorii (strain ATCC VR-613 / Malish 7).